A 353-amino-acid chain; its full sequence is Protein RecA (353 aa).

Residue 64–71 participates in ATP binding; it reads GPESSGKT. The tract at residues 331–353 is disordered; sequence LEEASAQKEEVPVEDKLFDDELE. A compositionally biased stretch (basic and acidic residues) spans 335–346; sequence SAQKEEVPVEDK.

Belongs to the RecA family.

The protein localises to the cytoplasm. Functionally, can catalyze the hydrolysis of ATP in the presence of single-stranded DNA, the ATP-dependent uptake of single-stranded DNA by duplex DNA, and the ATP-dependent hybridization of homologous single-stranded DNAs. It interacts with LexA causing its activation and leading to its autocatalytic cleavage. This Macrococcus caseolyticus (strain JCSC5402) (Macrococcoides caseolyticum) protein is Protein RecA.